The following is a 194-amino-acid chain: MAKEGLGLEITELRLGLPDAEHVAVANKNGEKKNKRVFSEIDDVGDENSSSGGGGDRKMENKNQVVGWPPVCSYRKKNSVNEASKMYVKVSMDGAPFLRKMDLGMHKGYSDLAFALEKLFGCYGMVEALKNVENGEHVPIYEDKDGDWMLVGDVPWEMFMESCKRLRIMKRADAKGFGLQPKGSLKGFIESVGK.

Positions 13-17 (LRLGL) match the EAR-like (transcriptional repression) motif. Positions 40–62 (EIDDVGDENSSSGGGGDRKMENK) are disordered. The PB1 domain maps to 85–173 (KMYVKVSMDG…KRLRIMKRAD (89 aa)).

It belongs to the Aux/IAA family. Homodimers and heterodimers.

It is found in the nucleus. Functionally, aux/IAA proteins are short-lived transcriptional factors that function as repressors of early auxin response genes at low auxin concentrations. Repression is thought to result from the interaction with auxin response factors (ARFs), proteins that bind to the auxin-responsive promoter element (AuxRE). Formation of heterodimers with ARF proteins may alter their ability to modulate early auxin response genes expression. This Vigna radiata var. radiata (Mung bean) protein is Auxin-induced protein 22A (AUX22A).